Here is a 227-residue protein sequence, read N- to C-terminus: UPF0758 protein CPF_2399 (227 aa).

The 123-residue stretch at 105–227 (KISKPSDVAK…FISLKEKDIL (123 aa)) folds into the MPN domain. Zn(2+) contacts are provided by His-176, His-178, and Asp-189. Residues 176–189 (HNHPSGDPTPSRDD) carry the JAMM motif motif.

It belongs to the UPF0758 family.

The sequence is that of UPF0758 protein CPF_2399 from Clostridium perfringens (strain ATCC 13124 / DSM 756 / JCM 1290 / NCIMB 6125 / NCTC 8237 / Type A).